The sequence spans 98 residues: NADH-ubiquinone oxidoreductase chain 4L (98 aa).

Transmembrane regions (helical) follow at residues 2 to 22 (PSISTNIILAFITALLGMLIF), 29 to 49 (SLLCLEGMMLSMFILSTLTIL), and 61 to 81 (ILLLVFAACEAAVGLALLVTV).

Belongs to the complex I subunit 4L family. Core subunit of respiratory chain NADH dehydrogenase (Complex I) which is composed of 45 different subunits.

The protein resides in the mitochondrion inner membrane. It catalyses the reaction a ubiquinone + NADH + 5 H(+)(in) = a ubiquinol + NAD(+) + 4 H(+)(out). Its function is as follows. Core subunit of the mitochondrial membrane respiratory chain NADH dehydrogenase (Complex I) which catalyzes electron transfer from NADH through the respiratory chain, using ubiquinone as an electron acceptor. Part of the enzyme membrane arm which is embedded in the lipid bilayer and involved in proton translocation. The protein is NADH-ubiquinone oxidoreductase chain 4L (MT-ND4L) of Lemur catta (Ring-tailed lemur).